The following is a 577-amino-acid chain: Putative pseudouridine synthase B0024.11 (577 aa).

Aspartate 188 functions as the Nucleophile in the catalytic mechanism. The 208-residue stretch at 265–472 (GFINYFGTQR…GESSRCLFVE (208 aa)) folds into the TRUD domain. Over residues 538–565 (KAMRDASFKTRGDDEKTEENVLEEKGSD) the composition is skewed to basic and acidic residues. The disordered stretch occupies residues 538-577 (KAMRDASFKTRGDDEKTEENVLEEKGSDDANELNLVSEDQ).

The protein belongs to the pseudouridine synthase TruD family.

The catalysed reaction is a uridine in tRNA = a pseudouridine in tRNA. This chain is Putative pseudouridine synthase B0024.11, found in Caenorhabditis elegans.